The chain runs to 205 residues: DNA-directed RNA polymerases IV and V subunit 4 (205 aa).

The disordered stretch occupies residues 1–79 (MSEKGGKGLK…TKSSKNSLHS (79 aa)). Over residues 48-60 (NVSSDQQPFQSSA) the composition is skewed to polar residues.

It belongs to the eukaryotic RPB4 RNA polymerase subunit family. In terms of assembly, component of the RNA polymerase IV and V complexes. Interacts with NRPD1 and NRPE1. As to expression, expressed in shoot meristematic region and in root tips. Detected in cotyledons, flowers and young leaves.

The protein resides in the nucleus. Functionally, DNA-dependent RNA polymerase catalyzes the transcription of DNA into RNA using the four ribonucleoside triphosphates as substrates. Component of RNA polymerases IV and V which mediate short-interfering RNAs (siRNA) accumulation and subsequent RNA-directed DNA methylation-dependent (RdDM) transcriptional gene silencing (TGS) of endogenous repeated sequences, including transposable elements. Required for the de novo DNA methylation directed by the RdDM pathway. The sequence is that of DNA-directed RNA polymerases IV and V subunit 4 (NRPD4) from Arabidopsis thaliana (Mouse-ear cress).